Here is a 447-residue protein sequence, read N- to C-terminus: Probable ribonuclease FAU-1 (447 aa).

The segment at 424 to 447 is disordered; sequence PEAPGGKICTPEGLTSAPPRSSSA.

It belongs to the FAU-1 family.

Probable RNase involved in rRNA stability through maturation and/or degradation of precursor rRNAs. Binds to RNA in loop regions with AU-rich sequences. The chain is Probable ribonuclease FAU-1 from Pyrobaculum neutrophilum (strain DSM 2338 / JCM 9278 / NBRC 100436 / V24Sta) (Thermoproteus neutrophilus).